Reading from the N-terminus, the 319-residue chain is ADP-L-glycero-D-manno-heptose-6-epimerase (319 aa).

NADP(+) is bound by residues 10-11, 31-32, Lys38, Lys53, and 79-83; these read FI, DD, and EGACS. The active-site Proton acceptor is Tyr144. Residue Lys148 coordinates NADP(+). Asn173 contributes to the substrate binding site. Val174 and Lys182 together coordinate NADP(+). The active-site Proton acceptor is the Lys182. Residues Ser184, His191, 205 to 208, Arg218, and Tyr282 contribute to the substrate site; that span reads FEGC.

This sequence belongs to the NAD(P)-dependent epimerase/dehydratase family. HldD subfamily. In terms of assembly, homopentamer. NADP(+) is required as a cofactor.

The catalysed reaction is ADP-D-glycero-beta-D-manno-heptose = ADP-L-glycero-beta-D-manno-heptose. It functions in the pathway nucleotide-sugar biosynthesis; ADP-L-glycero-beta-D-manno-heptose biosynthesis; ADP-L-glycero-beta-D-manno-heptose from D-glycero-beta-D-manno-heptose 7-phosphate: step 4/4. Catalyzes the interconversion between ADP-D-glycero-beta-D-manno-heptose and ADP-L-glycero-beta-D-manno-heptose via an epimerization at carbon 6 of the heptose. In Aeromonas salmonicida (strain A449), this protein is ADP-L-glycero-D-manno-heptose-6-epimerase.